A 118-amino-acid polypeptide reads, in one-letter code: Large ribosomal subunit protein uL18 (118 aa).

The interval 1-25 (MITKPDKNKVRQKRHRRVRGKLSGT) is disordered. The segment covering 10-20 (VRQKRHRRVRG) has biased composition (basic residues).

It belongs to the universal ribosomal protein uL18 family. Part of the 50S ribosomal subunit; part of the 5S rRNA/L5/L18/L25 subcomplex. Contacts the 5S and 23S rRNAs.

Its function is as follows. This is one of the proteins that bind and probably mediate the attachment of the 5S RNA into the large ribosomal subunit, where it forms part of the central protuberance. The polypeptide is Large ribosomal subunit protein uL18 (Streptococcus gordonii (strain Challis / ATCC 35105 / BCRC 15272 / CH1 / DL1 / V288)).